The primary structure comprises 278 residues: Protein irg-2 (278 aa).

A disordered region spans residues 152-179 (NSIRGQPFKSLQPENRTPTQVTGHQQES). The segment covering 163 to 179 (QPENRTPTQVTGHQQES) has biased composition (polar residues).

Its function is as follows. Plays a role in innate immunity by conferring resistance to virulent strains of the Gram-negative bacterium P.aeruginosa via the zip-2 pathway and independent of the pmk-1 p38MAPK pathway. Induced as part of several immune responses to translational inhibition arising from endocytosis of ToxA during P.aeruginosa infection or exposure to exogenous cycloheximide. The protein is Protein irg-2 of Caenorhabditis elegans.